The chain runs to 147 residues: Hemoglobin subunit epsilon (147 aa).

Positions 3-147 (HFTAEEKAAI…VAIALGHKYH (145 aa)) constitute a Globin domain. Residues serine 14 and serine 51 each carry the phosphoserine modification. Heme b is bound by residues histidine 64 and histidine 93.

This sequence belongs to the globin family. As to quaternary structure, heterotetramer of two alpha chains and two epsilon chains in early embryonic hemoglobin Gower-2; two zeta chains and two epsilon chains in early embryonic hemoglobin Gower-1. Red blood cells.

Functionally, the epsilon chain is a beta-type chain of early mammalian embryonic hemoglobin. This chain is Hemoglobin subunit epsilon (HBE1), found in Saimiri boliviensis boliviensis (Bolivian squirrel monkey).